The following is an 873-amino-acid chain: Leucine--tRNA ligase (873 aa).

Positions 42–52 (PYPSGKLHMGH) match the 'HIGH' region motif. Positions 628–632 (KMSKS) match the 'KMSKS' region motif. An ATP-binding site is contributed by Lys-631.

This sequence belongs to the class-I aminoacyl-tRNA synthetase family.

Its subcellular location is the cytoplasm. It carries out the reaction tRNA(Leu) + L-leucine + ATP = L-leucyl-tRNA(Leu) + AMP + diphosphate. In Azoarcus sp. (strain BH72), this protein is Leucine--tRNA ligase.